The following is a 517-amino-acid chain: Protein ERGIC-53 (517 aa).

Positions 1–30 (MAVSRRRVPQAGARSFFCALLLSFSQFTGS) are cleaved as a signal peptide. Residues 31-484 (DGTGGDAAAP…DLPPFPSCLS (454 aa)) are Lumenal-facing. The 224-residue stretch at 52 to 275 (RRFEYKYSFK…DVLSFLTFQL (224 aa)) folds into the L-type lectin-like domain. A carbohydrate is bound by residues Ser-96 and Asp-129. Ca(2+)-binding residues include Asp-160, Phe-162, and Asn-164. 2 residues coordinate a carbohydrate: Asn-164 and His-186. Asp-189 contacts Ca(2+). An intrachain disulfide couples Cys-198 to Cys-238. 259–261 (GGL) contributes to the a carbohydrate binding site. The residue at position 433 (Ser-433) is a Phosphoserine. The chain crosses the membrane as a helical span at residues 485–505 (TIHFVIFVVVQTVLFVGYIMY). The Cytoplasmic segment spans residues 506 to 517 (RTQQEAAAKKFF). Residues 506–517 (RTQQEAAAKKFF) are mediates interaction with RAB3GAP1, RAB3GAP2 and UBXN6. An ER export motif motif is present at residues 516–517 (FF).

In terms of assembly, exists both as a covalent disulfide-linked homohexamer, and a complex of three disulfide-linked dimers non-covalently kept together. Interacts with MCFD2. May interact with TMEM115. Interacts with RAB3GAP1 and RAB3GAP2. Interacts with UBXN6. Interacts with SERPINA1/alpha1-antitrypsin. Interacts with BET1.

It is found in the endoplasmic reticulum-Golgi intermediate compartment membrane. Its subcellular location is the golgi apparatus membrane. The protein resides in the endoplasmic reticulum membrane. In terms of biological role, mannose-specific lectin. May recognize sugar residues of glycoproteins, glycolipids, or glycosylphosphatidyl inositol anchors and may be involved in the sorting or recycling of proteins, lipids, or both. The LMAN1-MCFD2 complex forms a specific cargo receptor for the ER-to-Golgi transport of selected proteins. This is Protein ERGIC-53 (Lman1) from Mus musculus (Mouse).